A 37-amino-acid polypeptide reads, in one-letter code: Cytochrome b6-f complex subunit 5 (37 aa).

Residues 5-25 (LLSGIVLGLVPITLAGLFVTA) form a helical membrane-spanning segment.

Belongs to the PetG family. The 4 large subunits of the cytochrome b6-f complex are cytochrome b6, subunit IV (17 kDa polypeptide, PetD), cytochrome f and the Rieske protein, while the 4 small subunits are PetG, PetL, PetM and PetN. The complex functions as a dimer.

It localises to the plastid. The protein localises to the chloroplast thylakoid membrane. Component of the cytochrome b6-f complex, which mediates electron transfer between photosystem II (PSII) and photosystem I (PSI), cyclic electron flow around PSI, and state transitions. PetG is required for either the stability or assembly of the cytochrome b6-f complex. This Gnetum parvifolium (Small-leaved jointfir) protein is Cytochrome b6-f complex subunit 5.